A 414-amino-acid chain; its full sequence is Isocitrate dehydrogenase [NADP] cytoplasmic (414 aa).

Residue Ser2 is modified to N-acetylserine. A Phosphotyrosine modification is found at Tyr42. 75–77 (TIT) is an NADP(+) binding site. Thr77 contributes to the substrate binding site. Lys81 bears the N6-acetyllysine mark. Arg82 lines the NADP(+) pocket. Residues 94-100 (SPNGTIR) and Arg109 each bind substrate. Lys126 is subject to N6-succinyllysine. Arg132 and Lys212 together coordinate substrate. N6-acetyllysine occurs at positions 224 and 233. Asp252 lines the Mn(2+) pocket. An NADP(+)-binding site is contributed by Lys260. Residues Asp275 and Asp279 each coordinate Mn(2+). NADP(+) is bound at residue 310–315 (GTVTRH). N6-acetyllysine is present on Lys321. Residue Asn328 coordinates NADP(+). Phosphoserine is present on Ser389. Lys400 bears the N6-succinyllysine mark.

It belongs to the isocitrate and isopropylmalate dehydrogenases family. In terms of assembly, homodimer. Mg(2+) serves as cofactor. The cofactor is Mn(2+). Post-translationally, acetylation at Lys-374 dramatically reduces catalytic activity. As to expression, expressed preferentially in corneal epithelium. Constitute approximately 13% of the total soluble bovine corneal epithelial proteins.

It localises to the cytoplasm. It is found in the cytosol. It carries out the reaction D-threo-isocitrate + NADP(+) = 2-oxoglutarate + CO2 + NADPH. Catalyzes the NADP(+)-dependent oxidative decarboxylation of isocitrate (D-threo-isocitrate) to 2-ketoglutarate (2-oxoglutarate), which is required by other enzymes such as the phytanoyl-CoA dioxygenase. Plays a critical role in the generation of NADPH, an important cofactor in many biosynthesis pathways. May act as a corneal epithelial crystallin and may be involved in maintaining corneal epithelial transparency. This Bos taurus (Bovine) protein is Isocitrate dehydrogenase [NADP] cytoplasmic (IDH1).